The chain runs to 487 residues: WD-40 repeat-containing protein MSI5 (487 aa).

An N-acetylmethionine modification is found at methionine 1. Over residues 1–12 the composition is skewed to low complexity; the sequence is MESEAAATVQAT. A disordered region spans residues 1–44; that stretch reads MESEAAATVQATRPRRAPRTPVTAILTDKRRRKPKSNNESQLPF. The Nuclear localization signal signature appears at 14 to 21; the sequence is PRRAPRTP. 6 WD repeats span residues 142–182, 197–237, 270–310, 315–355, 364–404, and 419–466; these read IHPG…DRYA, GHQD…TMAG, GHKD…SPAM, AHDA…SNGV, GHRA…KKSE, and GHRD…YRPE. The interval 236–268 is disordered; that stretch reads AGSDSKSPGSSFKQTGEGSDKTGGPSVGPRGIY. Residues 237-252 are compositionally biased toward polar residues; sequence GSDSKSPGSSFKQTGE. The short motif at 288–303 is the DWD box element; that stretch reads FCSVGDDSCLMLWDAR.

Belongs to the WD repeat RBAP46/RBAP48/MSI1 family. As to quaternary structure, interacts with AHL16. Interacts with LHP1, PDP2, PDP3 and PDP6. Component of the PRC2 (polycomb repressive complex 2) complex which regulates histone methylation on histone H3K27.

It is found in the nucleus. Its function is as follows. Core histone-binding subunit that may target chromatin assembly factors, chromatin remodeling factors and histone deacetylases to their histone substrates in a manner that is regulated by nucleosomal DNA. Acts together with PDP1 and MSI4/FVE to regulate the function of the PRC2 complex on FLC. The protein is WD-40 repeat-containing protein MSI5 of Arabidopsis thaliana (Mouse-ear cress).